The following is a 611-amino-acid chain: DNA mismatch repair protein MutL (611 aa).

It belongs to the DNA mismatch repair MutL/HexB family.

Functionally, this protein is involved in the repair of mismatches in DNA. It is required for dam-dependent methyl-directed DNA mismatch repair. May act as a 'molecular matchmaker', a protein that promotes the formation of a stable complex between two or more DNA-binding proteins in an ATP-dependent manner without itself being part of a final effector complex. This is DNA mismatch repair protein MutL from Borreliella afzelii (strain PKo) (Borrelia afzelii).